The primary structure comprises 394 residues: NAD(P)H-quinone oxidoreductase subunit H 2 (394 aa).

The protein belongs to the complex I 49 kDa subunit family. NDH-1 can be composed of about 15 different subunits; different subcomplexes with different compositions have been identified which probably have different functions.

The protein localises to the cell inner membrane. The enzyme catalyses a plastoquinone + NADH + (n+1) H(+)(in) = a plastoquinol + NAD(+) + n H(+)(out). It catalyses the reaction a plastoquinone + NADPH + (n+1) H(+)(in) = a plastoquinol + NADP(+) + n H(+)(out). Functionally, NDH-1 shuttles electrons from an unknown electron donor, via FMN and iron-sulfur (Fe-S) centers, to quinones in the respiratory and/or the photosynthetic chain. The immediate electron acceptor for the enzyme in this species is believed to be plastoquinone. Couples the redox reaction to proton translocation, and thus conserves the redox energy in a proton gradient. Cyanobacterial NDH-1 also plays a role in inorganic carbon-concentration. The protein is NAD(P)H-quinone oxidoreductase subunit H 2 of Gloeobacter violaceus (strain ATCC 29082 / PCC 7421).